A 174-amino-acid polypeptide reads, in one-letter code: Crossover junction endodeoxyribonuclease RuvC (174 aa).

Catalysis depends on residues Asp-8, Glu-67, and Asp-139. Residues Asp-8, Glu-67, and Asp-139 each coordinate Mg(2+).

It belongs to the RuvC family. In terms of assembly, homodimer which binds Holliday junction (HJ) DNA. The HJ becomes 2-fold symmetrical on binding to RuvC with unstacked arms; it has a different conformation from HJ DNA in complex with RuvA. In the full resolvosome a probable DNA-RuvA(4)-RuvB(12)-RuvC(2) complex forms which resolves the HJ. Mg(2+) is required as a cofactor.

It is found in the cytoplasm. It catalyses the reaction Endonucleolytic cleavage at a junction such as a reciprocal single-stranded crossover between two homologous DNA duplexes (Holliday junction).. In terms of biological role, the RuvA-RuvB-RuvC complex processes Holliday junction (HJ) DNA during genetic recombination and DNA repair. Endonuclease that resolves HJ intermediates. Cleaves cruciform DNA by making single-stranded nicks across the HJ at symmetrical positions within the homologous arms, yielding a 5'-phosphate and a 3'-hydroxyl group; requires a central core of homology in the junction. The consensus cleavage sequence is 5'-(A/T)TT(C/G)-3'. Cleavage occurs on the 3'-side of the TT dinucleotide at the point of strand exchange. HJ branch migration catalyzed by RuvA-RuvB allows RuvC to scan DNA until it finds its consensus sequence, where it cleaves and resolves the cruciform DNA. This Pseudomonas putida (strain ATCC 700007 / DSM 6899 / JCM 31910 / BCRC 17059 / LMG 24140 / F1) protein is Crossover junction endodeoxyribonuclease RuvC.